The chain runs to 463 residues: Casein kinase 1 (463 aa).

Residues 9 to 278 (FKLGRKIGSG…LKRLFRDLFI (270 aa)) form the Protein kinase domain. Residues 15-23 (IGSGSFGEL) and Lys38 contribute to the ATP site. Asp128 serves as the catalytic Proton acceptor. Positions 296 to 306 (ESNRLRSSGRT) are enriched in polar residues. The tract at residues 296-448 (ESNRLRSSGR…TARNVHDDPT (153 aa)) is disordered. Residues 315–328 (ERTERAAARQDVPD) are compositionally biased toward basic and acidic residues. Composition is skewed to polar residues over residues 376–396 (TSSSRNGSTSRKALLSSSRPS) and 404–440 (NRSNLIPTSSGSSRPSTMQRLHQSTGLETRSSLTKTA).

This sequence belongs to the protein kinase superfamily. CK1 Ser/Thr protein kinase family. Casein kinase I subfamily. Monomer. Post-translationally, autophosphorylated. As to expression, expressed in leaves, stems, panicles and seeds. Expressed in root tissues and lamina joints.

The protein resides in the cytoplasm. It is found in the nucleus. It catalyses the reaction L-seryl-[protein] + ATP = O-phospho-L-seryl-[protein] + ADP + H(+). The catalysed reaction is L-threonyl-[protein] + ATP = O-phospho-L-threonyl-[protein] + ADP + H(+). With respect to regulation, inhibited by N-(2-aminoethyl)-5-chloroisoquinoline-8-sulfonamide (CKI-7). Functionally, casein kinases are operationally defined by their preferential utilization of acidic proteins such as caseins as substrates. Can phosphorylate casein in vitro. Required for normal root development through modulation of cell elongation. Plants silencing CKI1 show abnormal root development, with reduced number of lateral and adventitious roots, and shortened primary roots as a result of reduced cell elongation. May be involved in abscisic acid (ABA) and brassinosteroid (BR) signaling pathways. Plays an important role in the adaptive growth and fitness under low temperature (LT) conditions. May confer tolerance to LT through an auxin-dependent process. The protein is Casein kinase 1 (CKI1) of Oryza sativa subsp. japonica (Rice).